An 85-amino-acid polypeptide reads, in one-letter code: RNA-binding protein Hfq (85 aa).

The Sm domain occupies 9 to 68; that stretch reads DPFLNALRRERVPVSIYLVNGIKLQGQVESFDQFVILLKNTVSQMVYKHAISTVVPARPF.

This sequence belongs to the Hfq family. Homohexamer.

Its function is as follows. RNA chaperone that binds small regulatory RNA (sRNAs) and mRNAs to facilitate mRNA translational regulation in response to envelope stress, environmental stress and changes in metabolite concentrations. Also binds with high specificity to tRNAs. In Shewanella frigidimarina (strain NCIMB 400), this protein is RNA-binding protein Hfq.